Reading from the N-terminus, the 211-residue chain is WW domain-containing protein WWM1 (211 aa).

Residues 9 to 43 (PQVPSGWKAVFDDEYQTWYYVDLSTNSSQWEPPRG) enclose the WW domain. The disordered stretch occupies residues 32–116 (STNSSQWEPP…QRYYPQQAPM (85 aa)). Glycyl lysine isopeptide (Lys-Gly) (interchain with G-Cter in ubiquitin) cross-links involve residues K50 and K60. Position 75 is a phosphoserine (S75). The residue at position 78 (T78) is a Phosphothreonine. Over residues 80–116 (QVQAGAQAQQPRYYQPQQPQYPQYPQQQRYYPQQAPM) the composition is skewed to low complexity.

As to quaternary structure, interacts with metacaspase MCA1.

It is found in the cytoplasm. The protein localises to the nucleus. Its subcellular location is the mitochondrion. Functionally, involved in apoptosis. May play a role in nuclear function controlling cellular proliferation coupled to mitochondrial biogenesis. Causes impaired growth when overexpressed. The sequence is that of WW domain-containing protein WWM1 (WWM1) from Saccharomyces cerevisiae (strain ATCC 204508 / S288c) (Baker's yeast).